The chain runs to 396 residues: Methionine import ATP-binding protein MetN 2 (396 aa).

Positions 41–280 constitute an ABC transporter domain; sequence VSFELVGKVF…PRHGATRALL (240 aa). 77–84 is a binding site for ATP; that stretch reads GRSGAGKS.

It belongs to the ABC transporter superfamily. Methionine importer (TC 3.A.1.24) family. The complex is composed of two ATP-binding proteins (MetN), two transmembrane proteins (MetI) and a solute-binding protein (MetQ).

The protein localises to the cell inner membrane. It catalyses the reaction L-methionine(out) + ATP + H2O = L-methionine(in) + ADP + phosphate + H(+). The enzyme catalyses D-methionine(out) + ATP + H2O = D-methionine(in) + ADP + phosphate + H(+). Its function is as follows. Part of the ABC transporter complex MetNIQ involved in methionine import. Responsible for energy coupling to the transport system. The chain is Methionine import ATP-binding protein MetN 2 from Burkholderia mallei (strain ATCC 23344).